Reading from the N-terminus, the 189-residue chain is NADH-quinone oxidoreductase subunit B (189 aa).

Residues cysteine 39, cysteine 40, cysteine 104, and cysteine 135 each contribute to the [4Fe-4S] cluster site.

Belongs to the complex I 20 kDa subunit family. In terms of assembly, NDH-1 is composed of 14 different subunits. Subunits NuoB, C, D, E, F, and G constitute the peripheral sector of the complex. [4Fe-4S] cluster serves as cofactor.

The protein resides in the cell inner membrane. The catalysed reaction is a quinone + NADH + 5 H(+)(in) = a quinol + NAD(+) + 4 H(+)(out). In terms of biological role, NDH-1 shuttles electrons from NADH, via FMN and iron-sulfur (Fe-S) centers, to quinones in the respiratory chain. The immediate electron acceptor for the enzyme in this species is believed to be a menaquinone. Couples the redox reaction to proton translocation (for every two electrons transferred, four hydrogen ions are translocated across the cytoplasmic membrane), and thus conserves the redox energy in a proton gradient. In Chlorobium phaeobacteroides (strain DSM 266 / SMG 266 / 2430), this protein is NADH-quinone oxidoreductase subunit B.